A 94-amino-acid polypeptide reads, in one-letter code: Integration host factor subunit beta (94 aa).

The protein belongs to the bacterial histone-like protein family. In terms of assembly, heterodimer of an alpha and a beta chain.

This protein is one of the two subunits of integration host factor, a specific DNA-binding protein that functions in genetic recombination as well as in transcriptional and translational control. This Brucella anthropi (strain ATCC 49188 / DSM 6882 / CCUG 24695 / JCM 21032 / LMG 3331 / NBRC 15819 / NCTC 12168 / Alc 37) (Ochrobactrum anthropi) protein is Integration host factor subunit beta.